The following is a 637-amino-acid chain: Biosynthetic arginine decarboxylase (637 aa).

Position 101 is an N6-(pyridoxal phosphate)lysine (Lys101). Substrate is bound at residue 286-296; sequence FDVGGGLAVDY.

The protein belongs to the Orn/Lys/Arg decarboxylase class-II family. SpeA subfamily. Requires Mg(2+) as cofactor. It depends on pyridoxal 5'-phosphate as a cofactor.

The enzyme catalyses L-arginine + H(+) = agmatine + CO2. It functions in the pathway amine and polyamine biosynthesis; agmatine biosynthesis; agmatine from L-arginine: step 1/1. Functionally, catalyzes the biosynthesis of agmatine from arginine. The protein is Biosynthetic arginine decarboxylase of Shewanella baltica (strain OS195).